The chain runs to 126 residues: Aspartate 1-decarboxylase (126 aa).

Residue Ser25 is the Schiff-base intermediate with substrate; via pyruvic acid of the active site. At Ser25 the chain carries Pyruvic acid (Ser). Thr57 is a binding site for substrate. Residue Tyr58 is the Proton donor of the active site. 73–75 provides a ligand contact to substrate; sequence GAA.

This sequence belongs to the PanD family. Heterooctamer of four alpha and four beta subunits. Pyruvate serves as cofactor. Is synthesized initially as an inactive proenzyme, which is activated by self-cleavage at a specific serine bond to produce a beta-subunit with a hydroxyl group at its C-terminus and an alpha-subunit with a pyruvoyl group at its N-terminus.

The protein localises to the cytoplasm. It catalyses the reaction L-aspartate + H(+) = beta-alanine + CO2. It functions in the pathway cofactor biosynthesis; (R)-pantothenate biosynthesis; beta-alanine from L-aspartate: step 1/1. Catalyzes the pyruvoyl-dependent decarboxylation of aspartate to produce beta-alanine. The protein is Aspartate 1-decarboxylase of Acetivibrio thermocellus (strain ATCC 27405 / DSM 1237 / JCM 9322 / NBRC 103400 / NCIMB 10682 / NRRL B-4536 / VPI 7372) (Clostridium thermocellum).